Here is a 171-residue protein sequence, read N- to C-terminus: AN1-type zinc finger protein 2A (171 aa).

AN1-type zinc fingers lie at residues 4-52 (PDLG…KKDV) and 94-142 (KVFT…SSVS). Positions 10, 15, 25, 28, 33, 36, 42, 44, 100, 105, 115, 118, 123, 126, 132, and 134 each coordinate Zn(2+). Residues 135-171 (QAGSSSVSRGRSSASRAAEQKPSGVSWLAQRLRRTVK) are disordered. The span at 136–151 (AGSSSVSRGRSSASRA) shows a compositional bias: low complexity.

It localises to the cytoplasm. It is found in the nucleus. The sequence is that of AN1-type zinc finger protein 2A (Zfand2a) from Rattus norvegicus (Rat).